Reading from the N-terminus, the 366-residue chain is MAGPAWISKVSRLLGAFHNQKQVTRGFAGGVKTVTLIPGDGIGPEISAAVMKIFDAAKAPIQWEERNVTAIQGPGGKWMIPPEAKESMDKNKMGLKGPLKTPIAAGHPSMNLLLRKTFDLYANVRPCVSIEGYKTPYTDVNIVTIRENTEGEYSGIEHVIVDGVVQSIKLITEGASKRIAEFAFEYARNNHRSNVTAVHKANIMRMSDGLFLQKCREVAENCKDIKFNEMYLDTVCLNMVQDPSQFDVLVMPNLYGDILSDLCAGLIGGLGVTPSGNIGANGVAIFESVHGTAPDIAGKDMANPTALLLSAVMMLRHMGLFDHAAKIETACFATIKDGKSLTKDLGGNAKCSDFTEEICRRVKDLD.

A mitochondrion-targeting transit peptide spans M1–F27. N6-succinyllysine is present on K77. Phosphothreonine is present on T101. Residues R115, R125, and R146 each contribute to the substrate site. At K223 the chain carries N6-acetyllysine. Mg(2+) contacts are provided by D233, D257, and D261. K343 bears the N6-acetyllysine; alternate mark. K343 carries the N6-succinyllysine; alternate modification. The residue at position 350 (K350) is an N6-succinyllysine.

Belongs to the isocitrate and isopropylmalate dehydrogenases family. As to quaternary structure, heterooligomer of subunits alpha (IDH3A), beta (IDH3B), and gamma (IDH3G) in the apparent ratio of 2:1:1. The heterodimer containing one IDH3A and one IDH3B subunit and the heterodimer containing one IDH3A and one IDH3G subunit assemble into a heterotetramer (which contains two subunits of IDH3A, one of IDH3B and one of IDH3G) and further into the heterooctamer. It depends on Mg(2+) as a cofactor. Requires Mn(2+) as cofactor.

Its subcellular location is the mitochondrion. The catalysed reaction is D-threo-isocitrate + NAD(+) = 2-oxoglutarate + CO2 + NADH. Its activity is regulated as follows. The heterotetramer and the heterodimer composed of IDH3A and IDH3G subunits can be allosterically activated by citrate (CIT) or/and ADP, and the two activators can act independently or synergistically. The heterodimer composed of IDH3A and IDH3B subunits cannot be allosterically regulated and the allosteric regulation of the heterotetramer is through the IDH3G subunit and not the IDH3B subunit. The IDH3G subunit contains the allosteric site which consists of a CIT-binding site and an ADP-binding site, and the binding of CIT and ADP causes conformational changes at the allosteric site which are transmitted to the active site in the catalytic subunit (IDH3A) through a cascade of conformational changes at the heterodimer interface, leading to stabilization of the isocitrate-binding at the active site and thus activation of the enzyme. ATP can activate the heterotetramer and the heterodimer composed of IDH3A and IDH3G subunits at low concentrations but inhibits their activities at high concentrations, whereas ATP exhibits only inhibitory effect on the heterodimer composed of IDH3A and IDH3B subunits. Functionally, catalytic subunit of the enzyme which catalyzes the decarboxylation of isocitrate (ICT) into alpha-ketoglutarate. The heterodimer composed of the alpha (IDH3A) and beta (IDH3B) subunits and the heterodimer composed of the alpha (IDH3A) and gamma (IDH3G) subunits, have considerable basal activity but the full activity of the heterotetramer (containing two subunits of IDH3A, one of IDH3B and one of IDH3G) requires the assembly and cooperative function of both heterodimers. This chain is Isocitrate dehydrogenase [NAD] subunit alpha, mitochondrial (IDH3A), found in Sus scrofa (Pig).